A 119-amino-acid polypeptide reads, in one-letter code: Basic phospholipase A2 notexin (119 aa).

7 cysteine pairs are disulfide-bonded: Cys-11/Cys-71, Cys-27/Cys-118, Cys-29/Cys-45, Cys-44/Cys-99, Cys-51/Cys-92, Cys-60/Cys-85, and Cys-78/Cys-90. 3 residues coordinate Ca(2+): Tyr-28, Gly-30, and Gly-32. Residue His-48 is part of the active site. Asp-49 contributes to the Ca(2+) binding site. The active site involves Asp-93.

This sequence belongs to the phospholipase A2 family. Group I subfamily. D49 sub-subfamily. Monomer. The cofactor is Ca(2+). As to expression, expressed by the venom gland.

The protein resides in the secreted. It catalyses the reaction a 1,2-diacyl-sn-glycero-3-phosphocholine + H2O = a 1-acyl-sn-glycero-3-phosphocholine + a fatty acid + H(+). Functionally, snake venom phospholipase A2 (PLA2) that inhibits neuromuscular transmission by blocking acetylcholine release from the nerve termini. Is directly toxic to skeletal muscle upon local application in vivo (dystrophic effect). Also has direct nephrotoxicity in experimental mice; a single subcutaneous dose (1.38 ug/kg) produces renal tubular and glomerular damage within 24 hours. PLA2 catalyzes the calcium-dependent hydrolysis of the 2-acyl groups in 3-sn-phosphoglycerides. The protein is Basic phospholipase A2 notexin of Notechis scutatus scutatus (Mainland tiger snake).